Consider the following 292-residue polypeptide: Glycine--tRNA ligase alpha subunit (292 aa).

Belongs to the class-II aminoacyl-tRNA synthetase family. In terms of assembly, tetramer of two alpha and two beta subunits.

The protein resides in the cytoplasm. It catalyses the reaction tRNA(Gly) + glycine + ATP = glycyl-tRNA(Gly) + AMP + diphosphate. The polypeptide is Glycine--tRNA ligase alpha subunit (Synechococcus sp. (strain ATCC 27144 / PCC 6301 / SAUG 1402/1) (Anacystis nidulans)).